Consider the following 89-residue polypeptide: UPF0237 protein DIP1286 (89 aa).

Residues 4 to 78 (IISVTGADHT…KDQNLVIRIQ (75 aa)) enclose the ACT domain.

It belongs to the UPF0237 family.

This chain is UPF0237 protein DIP1286, found in Corynebacterium diphtheriae (strain ATCC 700971 / NCTC 13129 / Biotype gravis).